We begin with the raw amino-acid sequence, 81 residues long: MASREEIFSKVKSIISEKLGVDESQVTEEAKLIDDLGADSLDLVDLVMDFESEFGVKVDDADLEKISTVGDIVSYIEKKLG.

One can recognise a Carrier domain in the interval 5–80; it reads EEIFSKVKSI…DIVSYIEKKL (76 aa). O-(pantetheine 4'-phosphoryl)serine is present on Ser40.

The protein belongs to the acyl carrier protein (ACP) family. 4'-phosphopantetheine is transferred from CoA to a specific serine of apo-ACP by AcpS. This modification is essential for activity because fatty acids are bound in thioester linkage to the sulfhydryl of the prosthetic group.

It localises to the cytoplasm. The protein operates within lipid metabolism; fatty acid biosynthesis. Its function is as follows. Carrier of the growing fatty acid chain in fatty acid biosynthesis. This Thermotoga maritima (strain ATCC 43589 / DSM 3109 / JCM 10099 / NBRC 100826 / MSB8) protein is Acyl carrier protein.